The chain runs to 214 residues: Pyrophosphatase PpaX (214 aa).

The active-site Nucleophile is Asp-9.

Belongs to the HAD-like hydrolase superfamily. PpaX family. Mg(2+) serves as cofactor.

The catalysed reaction is diphosphate + H2O = 2 phosphate + H(+). Hydrolyzes pyrophosphate formed during P-Ser-HPr dephosphorylation by HPrK/P. Might play a role in controlling the intracellular pyrophosphate pool. This chain is Pyrophosphatase PpaX, found in Oceanobacillus iheyensis (strain DSM 14371 / CIP 107618 / JCM 11309 / KCTC 3954 / HTE831).